A 459-amino-acid chain; its full sequence is Inositol-trisphosphate 3-kinase A (459 aa).

The disordered stretch occupies residues 1-29; that stretch reads MTLPGRPTGMARPRGAGPCSPGLERAPRR. Residues R35, R55, and R62 each carry the omega-N-methylarginine modification. Residues 49–164 form a disordered region; the sequence is AAAGEPRARG…TSEDVGQKSH (116 aa). The span at 116–132 shows a compositional bias: low complexity; sequence RRLSTSSLSSTGSSSLL. S135 and S195 each carry phosphoserine. Residues S195, K207, 247–249, and D260 each bind ATP; that span reads QDL. K262 and R283 together coordinate substrate. The interval 285-293 is calmodulin-binding; it reads DMYKKMLAV. Substrate is bound at residue 310 to 317; it reads KPRYMQWR. ATP-binding residues include K334 and D414. Position 417 (K417) interacts with substrate.

The protein belongs to the inositol phosphokinase (IPK) family.

The protein localises to the cytoplasm. Its subcellular location is the cytoskeleton. It carries out the reaction 1D-myo-inositol 1,4,5-trisphosphate + ATP = 1D-myo-inositol 1,3,4,5-tetrakisphosphate + ADP + H(+). Its activity is regulated as follows. Activated by calcium/calmodulin. In terms of biological role, catalyzes the phosphorylation of 1D-myo-inositol 1,4,5-trisphosphate (InsP3) into 1D-myo-inositol 1,3,4,5-tetrakisphosphate and participates to the regulation of calcium homeostasis. This Mus musculus (Mouse) protein is Inositol-trisphosphate 3-kinase A.